A 239-amino-acid chain; its full sequence is tRNA (guanine-N(1)-)-methyltransferase (239 aa).

Residues G113 and 137-142 contribute to the S-adenosyl-L-methionine site; that span reads LGDYVL.

It belongs to the RNA methyltransferase TrmD family. In terms of assembly, homodimer.

It localises to the cytoplasm. The enzyme catalyses guanosine(37) in tRNA + S-adenosyl-L-methionine = N(1)-methylguanosine(37) in tRNA + S-adenosyl-L-homocysteine + H(+). Functionally, specifically methylates guanosine-37 in various tRNAs. This Cutibacterium acnes (strain DSM 16379 / KPA171202) (Propionibacterium acnes) protein is tRNA (guanine-N(1)-)-methyltransferase.